A 405-amino-acid polypeptide reads, in one-letter code: Serine/threonine transporter SstT (405 aa).

8 helical membrane passes run 13–33 (GGSL…LAGF), 43–63 (FLGD…VFVL), 82–102 (IILL…LMSF), 141–161 (ALIN…GIAL), 185–205 (FVIC…IAQT), 217–237 (LGVL…LIVF), 298–318 (MAGA…TLGI), and 339–359 (ASGV…LFGI).

Belongs to the dicarboxylate/amino acid:cation symporter (DAACS) (TC 2.A.23) family.

The protein resides in the cell inner membrane. It carries out the reaction L-serine(in) + Na(+)(in) = L-serine(out) + Na(+)(out). The enzyme catalyses L-threonine(in) + Na(+)(in) = L-threonine(out) + Na(+)(out). Involved in the import of serine and threonine into the cell, with the concomitant import of sodium (symport system). This chain is Serine/threonine transporter SstT, found in Shewanella amazonensis (strain ATCC BAA-1098 / SB2B).